We begin with the raw amino-acid sequence, 147 residues long: Mucoricin (147 aa).

Residues 4-143 (EEGRLFFIKS…VSANQRWELV (140 aa)) enclose the Ricin B-type lectin domain.

The protein belongs to the ribosome-inactivating protein family. Type 1 RIP subfamily.

The protein localises to the secreted. It carries out the reaction Endohydrolysis of the N-glycosidic bond at one specific adenosine on the 28S rRNA.. N-glycosylase that inhibits protein synthesis in the host by depurinating ribosomal rRNA, and thus acts as a ribosomal inactivating protein (RIP). Promotes vascular permeability in the host and induces necrosis and apoptosis of host alveolar epithelial cells. The chain is Mucoricin from Rhizopus delemar (strain RA 99-880 / ATCC MYA-4621 / FGSC 9543 / NRRL 43880) (Mucormycosis agent).